A 250-amino-acid polypeptide reads, in one-letter code: MFMMLKNKVAIVTGGTRGIGFAVVKKFIENGAAVSLWGSRQETVDQALEQLKELYPDAKISGKYPSLKDTAQVTAMINQVKEEFGAVDILVNNAGISQSTSFYNYQPEEFQKIVDLNVTAVFNCSQAAAKIMKEQGGGVILNTSSMVSIYGQPSGCGYPASKFAVNGLTKSLARELGCDNIRVNAVAPGITRTDMVAALPEAVIKPLIATIPLGRVGEPEDIANAFLFLASDMASYVTGEILSVDGAARS.

Asparagine 93, tyrosine 158, and lysine 162 together coordinate NADP(+). The active-site Proton acceptor is the tyrosine 158.

The protein belongs to the short-chain dehydrogenases/reductases (SDR) family.

It catalyses the reaction lithocholate + NADP(+) = 3-oxo-5beta-cholan-24-oate + NADPH + H(+). The catalysed reaction is deoxycholate + NADP(+) = 12alpha-hydroxy-3-oxo-5beta-cholan-24-oate + NADPH + H(+). It carries out the reaction deoxycholate + NAD(+) = 12alpha-hydroxy-3-oxo-5beta-cholan-24-oate + NADH + H(+). The enzyme catalyses cholate + NADP(+) = 7alpha,12alpha-dihydroxy-3-oxo-5beta-cholan-24-oate + NADPH + H(+). It catalyses the reaction chenodeoxycholate + NADP(+) = 3-oxochenodeoxycholate + NADPH + H(+). In terms of biological role, involved in the modification of secondary bile acids into iso-bile acids (3beta-bile acids) via epimerization of the 3-OH group through a 3-oxo-intermediate. Catalyzes the oxidation of deoxycholate (DCA) and lithocholate (LCA) to yield 12-alpha-hydroxy-3-oxo-5-beta-cholan-24-oate (3-oxo-DCA) and 3-oxo-5-beta-cholan-24-oate (3-oxo-LCA), respectively. Is also able to catalyze the oxidation of cholate (CA) and chenodeoxycholate (CDCA) into 3-dehydrocholate (3-oxo-CA) and 7-alpha-hydroxy-3-oxo-5-beta-cholan-24-oate (3-oxo-CDCA), respectively. Can also catalyze the reverse reactions in vitro. Accepts both NADPH and NADH as cosubstrates. The conversion of the abundant bile acid DCA into isoDCA by the gut bacterium R.gnavus favors the growth of the keystone commensal genus Bacteroides, since isoDCA is less cytotoxic than its parent compound, DCA; iso-bile acids have thus a potential role in modulating gut community composition. The polypeptide is 3alpha-hydroxysteroid dehydrogenase (Mediterraneibacter gnavus (strain ATCC 29149 / DSM 114966 / JCM 6515 / VPI C7-9) (Ruminococcus gnavus)).